Consider the following 146-residue polypeptide: Large ribosomal subunit protein uL15 (146 aa).

The tract at residues 1–51 (MQLNTLKPAEGSKKNRRRVGRGIGSGLGKTAGRGHKGQKSRSGGFHKVGFE) is disordered. The segment covering 21–31 (RGIGSGLGKTA) has biased composition (gly residues).

It belongs to the universal ribosomal protein uL15 family. In terms of assembly, part of the 50S ribosomal subunit.

In terms of biological role, binds to the 23S rRNA. This is Large ribosomal subunit protein uL15 from Polynucleobacter asymbioticus (strain DSM 18221 / CIP 109841 / QLW-P1DMWA-1) (Polynucleobacter necessarius subsp. asymbioticus).